The sequence spans 353 residues: A-kinase anchor protein 7 isoforms delta and gamma (353 aa).

Composition is skewed to basic and acidic residues over residues 1 to 22 and 66 to 76; these read MERP…RGEE and RSKENRGDRND. Disordered stretches follow at residues 1-33 and 47-85; these read MERP…SPVG and DDCG…KKAK. Residues threonine 134 and 224 to 226 contribute to the AMP site; that span reads HLT. CMP contacts are provided by residues threonine 134 and 224-226; that span reads HLT. The PKA-RII-alpha subunit binding domain stretch occupies residues 299–353; sequence AELVRLSKRLVENAVLKAVQQYLEETQNKKQPGEGNSVKAEEGDRNGDGSDNNRK. The tract at residues 300-324 is RI-alpha-binding; that stretch reads ELVRLSKRLVENAVLKAVQQYLEET. An RII-binding region spans residues 301 to 314; that stretch reads LVRLSKRLVENAVL. Positions 321 to 353 are disordered; the sequence is LEETQNKKQPGEGNSVKAEEGDRNGDGSDNNRK. A compositionally biased stretch (basic and acidic residues) spans 337-353; it reads KAEEGDRNGDGSDNNRK.

Binds cAMP-dependent protein kinase (PKA). Interacts with PRKCA; only the cytoplasmic form is capable of interacting with PRKCA. Expressed highly in the heart, and moderately in brain, lung, liver, kidney and testis. Hardly detectable in spleen and skeletal muscle. In kidney, isoform Delta is expressed in the principal cells of the IMCD.

The protein localises to the nucleus. The protein resides in the cytoplasm. It is found in the cell membrane. Functionally, probably targets cAMP-dependent protein kinase (PKA) to the cellular membrane or cytoskeletal structures. The membrane-associated form reduces epithelial sodium channel (ENaC) activity, whereas the free cytoplasmic form may negatively regulate ENaC channel feedback inhibition by intracellular sodium. Isoform Delta may be involved in shuttling aquaporin-2 (AQP2) to the plasma membrane. The sequence is that of A-kinase anchor protein 7 isoforms delta and gamma from Rattus norvegicus (Rat).